The primary structure comprises 142 residues: MFACAKLACTPSLIRAGSRVAYRPISASVLSRPEASRTGEGSAVFNGAQNGVSQLIQREFQTSAISRDIDTAAKFIGAGAATVGVAGSGAGIGTVFGSLIIGYARNPSLKQQLFSYAILGFALSEAMGLFCLMVAFLILFAM.

A mitochondrion-targeting transit peptide spans 1-67 (MFACAKLACT…REFQTSAISR (67 aa)). A helical transmembrane segment spans residues 83-103 (VGVAGSGAGIGTVFGSLIIGY). An N6,N6,N6-trimethyllysine modification is found at K110. Residues 118-138 (ILGFALSEAMGLFCLMVAFLI) traverse the membrane as a helical segment.

The protein belongs to the ATPase C chain family. As to quaternary structure, F-type ATPases have 2 components, CF(1) - the catalytic core - and CF(0) - the membrane proton channel. CF(1) has five subunits: alpha(3), beta(3), gamma(1), delta(1), epsilon(1). CF(0) has three main subunits: a, b and c. Interacts with TMEM70 and TMEM242. In terms of processing, trimethylated by ATPSCKMT at Lys-110. Methylation is required for proper incorporation of the C subunit into the ATP synthase complex and mitochondrial respiration.

The protein localises to the mitochondrion membrane. Mitochondrial membrane ATP synthase (F(1)F(0) ATP synthase or Complex V) produces ATP from ADP in the presence of a proton gradient across the membrane which is generated by electron transport complexes of the respiratory chain. F-type ATPases consist of two structural domains, F(1) - containing the extramembraneous catalytic core and F(0) - containing the membrane proton channel, linked together by a central stalk and a peripheral stalk. During catalysis, ATP synthesis in the catalytic domain of F(1) is coupled via a rotary mechanism of the central stalk subunits to proton translocation. Part of the complex F(0) domain. A homomeric c-ring of probably 10 subunits is part of the complex rotary element. The protein is ATP synthase F(0) complex subunit C3, mitochondrial of Pongo abelii (Sumatran orangutan).